A 120-amino-acid polypeptide reads, in one-letter code: Immunoglobulin kappa variable 2-112 (120 aa).

The first 20 residues, Met1–Gly20, serve as a signal peptide directing secretion. The framework-1 stretch occupies residues Asp21–Cys43. A disulfide bridge links Cys43 with Cys113. The tract at residues Arg44–Asn59 is complementarity-determining-1. The segment at Trp60–Tyr74 is framework-2. The complementarity-determining-2 stretch occupies residues Leu75–Ser81. The segment at Gly82–Cys113 is framework-3. A complementarity-determining-3 region spans residues Gln114–Pro120.

The polypeptide is Immunoglobulin kappa variable 2-112 (Mus musculus (Mouse)).